Here is a 360-residue protein sequence, read N- to C-terminus: MERVYNFSAGPSILPLPVLEKVQKELVNYNGTGMSIMEMSHRSSYFQSIIDEAGSLLRELMNIPDEYEVLFLQGGASLQFSMIPLNLMNTYKKAGYVLTGSWSKKALQEAEKVGEVQVIASSENEKFTTIPKLDGLLGNEKLDYVHITTNNTIEGTKYVDIPHVDKVPLVADMSSNILSERYDVSKFGLIYAGAQKNLGPAGLTIAIIKRDLIGGADRYCPTMLNYETYSKNNSLYNTPPSFSIYVTKIVLEWLKEQGGVSAIEEQNKMKSSLLYNFLDESKLFTSPVDPTYRSLMNIPFTTPSEELNNEFLQKAKERGLVTLKGHRSVGGMRASIYNAMPAHGVQQLVNYMKEFELENR.

Arg42 contacts L-glutamate. Residues 76 to 77, Trp102, Thr152, Asp172, and Gln195 contribute to the pyridoxal 5'-phosphate site; that span reads AS. The residue at position 196 (Lys196) is an N6-(pyridoxal phosphate)lysine. 237–238 contributes to the pyridoxal 5'-phosphate binding site; it reads NT.

The protein belongs to the class-V pyridoxal-phosphate-dependent aminotransferase family. SerC subfamily. In terms of assembly, homodimer. Pyridoxal 5'-phosphate is required as a cofactor.

Its subcellular location is the cytoplasm. The enzyme catalyses O-phospho-L-serine + 2-oxoglutarate = 3-phosphooxypyruvate + L-glutamate. It catalyses the reaction 4-(phosphooxy)-L-threonine + 2-oxoglutarate = (R)-3-hydroxy-2-oxo-4-phosphooxybutanoate + L-glutamate. The protein operates within amino-acid biosynthesis; L-serine biosynthesis; L-serine from 3-phospho-D-glycerate: step 2/3. Functionally, catalyzes the reversible conversion of 3-phosphohydroxypyruvate to phosphoserine and of 3-hydroxy-2-oxo-4-phosphonooxybutanoate to phosphohydroxythreonine. The polypeptide is Phosphoserine aminotransferase (Bacillus thuringiensis subsp. konkukian (strain 97-27)).